Here is a 176-residue protein sequence, read N- to C-terminus: Pituitary adenylate cyclase-activating polypeptide (176 aa).

The N-terminal stretch at 1–24 (MTMCSGARLALLVYGILMHSSVYG) is a signal peptide. The propeptide occupies 25 to 80 (SPAASGLRFPGIRPENEAYDEDGNPQQDFYDSEPPGVGSPASALRDAYALYYPAEE). Disordered stretches follow at residues 36–62 (IRPENEAYDEDGNPQQDFYDSEPPGVG) and 115–134 (GTPGGGADDDSEPLSKRHSD). The tract at residues 150–158 (VKKYLAAVL) is important for receptor binding. Leucine amide is present on Leu-158. Lys-169 bears the Lysine amide mark. A propeptide spanning residues 173 to 176 (IPYL) is cleaved from the precursor.

The protein belongs to the glucagon family.

The protein localises to the secreted. Its function is as follows. PACAP is a neuropeptide involved in diverse array of physiological processes through activating the PACAP subfamily of class B1 G protein-coupled receptors: VIP receptor 1 (VIPR1), VIP receptor 2 (VIPR2), and PACAP type I receptor (ADCYAP1R1). Exerts neuroprotective and general cytoprotective effects due to anti-apoptotic, anti-inflammatory, and antioxidant actions. Promotes neuron projection development through the RAPGEF2/Rap1/B-Raf/ERK pathway. In chromaffin cells, induces long-lasting increase of intracellular calcium concentrations and neuroendocrine secretion. Involved in the control of glucose homeostasis, induces insulin secretion by pancreatic beta cells. PACAP exists in two bioactive forms from proteolysis of the same precursor protein, PACAP27 and PACAP38, which differ by eleven amino acid residues in the C-terminus. This chain is Pituitary adenylate cyclase-activating polypeptide (ADCYAP1), found in Ovis aries (Sheep).